Here is a 100-residue protein sequence, read N- to C-terminus: Urease subunit gamma (100 aa).

It belongs to the urease gamma subunit family. As to quaternary structure, heterotrimer of UreA (gamma), UreB (beta) and UreC (alpha) subunits. Three heterotrimers associate to form the active enzyme.

The protein resides in the cytoplasm. The catalysed reaction is urea + 2 H2O + H(+) = hydrogencarbonate + 2 NH4(+). It participates in nitrogen metabolism; urea degradation; CO(2) and NH(3) from urea (urease route): step 1/1. The polypeptide is Urease subunit gamma (Pseudomonas syringae pv. tomato (strain ATCC BAA-871 / DC3000)).